The following is a 643-amino-acid chain: Threonine--tRNA ligase (643 aa).

One can recognise a TGS domain in the interval 1-61 (MIKITLKDGS…NEDSSLEICT (61 aa)). The catalytic stretch occupies residues 240-540 (DHNKLGRELG…LIEKYAGALP (301 aa)). Zn(2+)-binding residues include Cys335, His386, and His517.

Belongs to the class-II aminoacyl-tRNA synthetase family. Homodimer. It depends on Zn(2+) as a cofactor.

It is found in the cytoplasm. The catalysed reaction is tRNA(Thr) + L-threonine + ATP = L-threonyl-tRNA(Thr) + AMP + diphosphate + H(+). Its function is as follows. Catalyzes the attachment of threonine to tRNA(Thr) in a two-step reaction: L-threonine is first activated by ATP to form Thr-AMP and then transferred to the acceptor end of tRNA(Thr). Also edits incorrectly charged L-seryl-tRNA(Thr). The chain is Threonine--tRNA ligase from Clostridium perfringens (strain ATCC 13124 / DSM 756 / JCM 1290 / NCIMB 6125 / NCTC 8237 / Type A).